The chain runs to 221 residues: GFP-like non-fluorescent chromoprotein (221 aa).

The segment at residues 62–64 (QYG) is a cross-link (2-iminomethyl-5-imidazolinone (Gln-Gly)). Position 63 is a 2,3-didehydrotyrosine (Y63).

Belongs to the GFP family. Homotetramer. Contains a chromophore consisting of modified amino acid residues. The chromophore is formed by autocatalytic backbone condensation between Xaa-N and Gly-(N+2), oxidation of Tyr-(N+1) to didehydrotyrosine, and formation of a double bond to the alpha-amino nitrogen of residue Xaa-N. Maturation of the chromophore requires nothing other than molecular oxygen. The precise stereochemistry of the tyrosine has not been determined.

In terms of biological role, non-fluorescent pigment protein that is lilac in color. This is GFP-like non-fluorescent chromoprotein from Goniopora tenuidens (Anemone coral).